Consider the following 164-residue polypeptide: Endoribonuclease YbeY (164 aa).

3 residues coordinate Zn(2+): H132, H136, and H142.

The protein belongs to the endoribonuclease YbeY family. It depends on Zn(2+) as a cofactor.

It is found in the cytoplasm. In terms of biological role, single strand-specific metallo-endoribonuclease involved in late-stage 70S ribosome quality control and in maturation of the 3' terminus of the 16S rRNA. This is Endoribonuclease YbeY from Clostridium kluyveri (strain NBRC 12016).